The following is a 784-amino-acid chain: MKKRIPTLLATMIASALYSHQGLAADLASQCMLGVPSYDRPLVKGDTNDLPVTINADNAKGNYPDDAVFTGNVDIMQGNSRLQADEVQLHQKQAEGQPEPVRTVDALGNVHYDDNQVILKGPKGWANLNTKDTNVWEGDYQMVGRQGRGKADLMKQRGENRYTILENGSFTSCLPGSDTWSVVGSEVIHDREEQVAEIWNARFKVGPVPIFYSPYLQLPVGDKRRSGFLIPNAKYTTKNYFEFYLPYYWNIAPNMDATITPHYMHRRGNIMWENEFRYLTQAGAGLMELDYLPSDKVYEDEHPKEGDKHRWLFYWQHSGVMDQVWRFNVDYTKVSDSSYFNDFDSKYGSSTDGYATQKFSVGYAVQNFDATVSTKQFQVFNDQNTSSYSAEPQLDVNYYHNDLGPFDTRIYGQAVHFVNTKDNMPEATRVHLEPTISLPLSNRWGSLNTEAKLMATHYQQTNLDWYNANNSKKLEDSVNRVMPQFKVDGKLVFERDMAMLAPGYTQTLEPRVQYLYVPYRDQSGIYNYDSSLLQSDYNGLFRDRTYGGLDRIASANQVTTGVTTRIYDDAAVERFNVSVGQIYYFTESRTGDDNIKWENDDKTGSLVWAGDTYWRISERWGLRSGVQYDTRLDSVATSSSSLEYRRDQDRLVQLNYRYASPEYIQATLPSYYSTAEQYKNGINQVGAVASWPIADRWSIVGAYYFDTNSSKPADQMLGLQYNSCCYAIRVGYERKLNGWDNDKQHAIYDNAIGFNIELRGLSSNYGLGTQEMLRSNILPYQSSM.

Positions 1–24 are cleaved as a signal peptide; sequence MKKRIPTLLATMIASALYSHQGLA. 2 cysteine pairs are disulfide-bonded: C31–C724 and C173–C725.

Belongs to the LptD family. In terms of assembly, component of the lipopolysaccharide transport and assembly complex. Interacts with LptE and LptA. Contains two intramolecular disulfide bonds.

It localises to the cell outer membrane. In terms of biological role, together with LptE, is involved in the assembly of lipopolysaccharide (LPS) at the surface of the outer membrane. This chain is LPS-assembly protein LptD, found in Salmonella typhi.